We begin with the raw amino-acid sequence, 81 residues long: Photosystem I iron-sulfur center (81 aa).

2 consecutive 4Fe-4S ferredoxin-type domains span residues 2-31 (SHSVKIYDTCIGCTQCVRACPTDVLEMVPW) and 39-68 (IASAPRTEDCVGCKRCESACPTDFLSVRVY). Positions 11, 14, 17, 21, 48, 51, 54, and 58 each coordinate [4Fe-4S] cluster.

In terms of assembly, the eukaryotic PSI reaction center is composed of at least 11 subunits. Requires [4Fe-4S] cluster as cofactor.

It localises to the plastid. The protein resides in the chloroplast thylakoid membrane. The enzyme catalyses reduced [plastocyanin] + hnu + oxidized [2Fe-2S]-[ferredoxin] = oxidized [plastocyanin] + reduced [2Fe-2S]-[ferredoxin]. Functionally, apoprotein for the two 4Fe-4S centers FA and FB of photosystem I (PSI); essential for photochemical activity. FB is the terminal electron acceptor of PSI, donating electrons to ferredoxin. The C-terminus interacts with PsaA/B/D and helps assemble the protein into the PSI complex. Required for binding of PsaD and PsaE to PSI. PSI is a plastocyanin/cytochrome c6-ferredoxin oxidoreductase, converting photonic excitation into a charge separation, which transfers an electron from the donor P700 chlorophyll pair to the spectroscopically characterized acceptors A0, A1, FX, FA and FB in turn. This chain is Photosystem I iron-sulfur center, found in Nephroselmis olivacea (Green alga).